Here is a 438-residue protein sequence, read N- to C-terminus: Trigger factor (438 aa).

In terms of domain architecture, PPIase FKBP-type spans 160–245 (DDKVTIDFVG…VKKIQQAELP (86 aa)).

The protein belongs to the FKBP-type PPIase family. Tig subfamily.

The protein localises to the cytoplasm. It carries out the reaction [protein]-peptidylproline (omega=180) = [protein]-peptidylproline (omega=0). Functionally, involved in protein export. Acts as a chaperone by maintaining the newly synthesized protein in an open conformation. Functions as a peptidyl-prolyl cis-trans isomerase. The sequence is that of Trigger factor from Francisella tularensis subsp. novicida (strain U112).